The sequence spans 170 residues: Small ribosomal subunit protein uS13m (170 aa).

The disordered stretch occupies residues 130-170 (LKKKPTNRKERRIFNKIKKLQDKHNKQQQKNKKSKKWKTKK). Basic residues-rich tracts occupy residues 132–147 (KKPT…NKIK) and 155–170 (KQQQ…KTKK).

This sequence belongs to the universal ribosomal protein uS13 family. In terms of assembly, part of the small ribosomal subunit.

Its subcellular location is the mitochondrion. Its function is as follows. Located at the top of the head of the small subunit, it contacts several helices of the small subunit rRNA. The sequence is that of Small ribosomal subunit protein uS13m (mrps13) from Dictyostelium citrinum (Slime mold).